The chain runs to 91 residues: MALSLFTVGQLIFLFWTMRITEANPDPAAKAVPAAAAPDTASDAAAAAAATAATAAAAAAATAATAAKAAALTAANAAAAAAATAAAAARG.

Residues 1–21 (MALSLFTVGQLIFLFWTMRIT) form the signal peptide. A propeptide spans 22 to 39 (EANPDPAAKAVPAAAAPD) (removed by a dipeptidylpeptidase).

The protein belongs to the type-I AFP family. As to expression, detected in blood serum (at protein level).

The protein localises to the secreted. Contributes to protect fish blood from freezing at subzero sea water temperatures. Lowers the blood freezing point. Binds to nascent ice crystals and prevents further growth. The chain is Ice-structuring protein 2A7 from Pseudopleuronectes americanus (Winter flounder).